A 314-amino-acid chain; its full sequence is Probable tRNA pseudouridine synthase B (314 aa).

The segment covering 1 to 10 (MATRGRHRSR) has biased composition (basic residues). Residues 1–30 (MATRGRHRSRTSGTSSEPMTLRAPPDERDL) form a disordered region. Catalysis depends on D72, which acts as the Nucleophile. Residues 237–314 (LPRVTIAPSA…LVVELDRMLV (78 aa)) form the PUA domain.

Belongs to the pseudouridine synthase TruB family. Type 2 subfamily.

It carries out the reaction uridine(55) in tRNA = pseudouridine(55) in tRNA. Functionally, could be responsible for synthesis of pseudouridine from uracil-55 in the psi GC loop of transfer RNAs. The polypeptide is Probable tRNA pseudouridine synthase B (Haloarcula marismortui (strain ATCC 43049 / DSM 3752 / JCM 8966 / VKM B-1809) (Halobacterium marismortui)).